The primary structure comprises 134 residues: Ribosome-binding factor A (134 aa).

It belongs to the RbfA family. In terms of assembly, monomer. Binds 30S ribosomal subunits, but not 50S ribosomal subunits or 70S ribosomes.

The protein localises to the cytoplasm. In terms of biological role, one of several proteins that assist in the late maturation steps of the functional core of the 30S ribosomal subunit. Associates with free 30S ribosomal subunits (but not with 30S subunits that are part of 70S ribosomes or polysomes). Required for efficient processing of 16S rRNA. May interact with the 5'-terminal helix region of 16S rRNA. The sequence is that of Ribosome-binding factor A from Sinorhizobium medicae (strain WSM419) (Ensifer medicae).